We begin with the raw amino-acid sequence, 505 residues long: Maturase K (505 aa).

Belongs to the intron maturase 2 family. MatK subfamily.

The protein resides in the plastid. The protein localises to the chloroplast. Functionally, usually encoded in the trnK tRNA gene intron. Probably assists in splicing its own and other chloroplast group II introns. This is Maturase K from Cubanola domingensis.